The sequence spans 290 residues: 4-hydroxy-tetrahydrodipicolinate synthase (290 aa).

Threonine 48 provides a ligand contact to pyruvate. Tyrosine 137 serves as the catalytic Proton donor/acceptor. Lysine 165 (schiff-base intermediate with substrate) is an active-site residue. Position 206 (isoleucine 206) interacts with pyruvate.

Belongs to the DapA family. Homotetramer; dimer of dimers.

It is found in the cytoplasm. It carries out the reaction L-aspartate 4-semialdehyde + pyruvate = (2S,4S)-4-hydroxy-2,3,4,5-tetrahydrodipicolinate + H2O + H(+). Its pathway is amino-acid biosynthesis; L-lysine biosynthesis via DAP pathway; (S)-tetrahydrodipicolinate from L-aspartate: step 3/4. Functionally, catalyzes the condensation of (S)-aspartate-beta-semialdehyde [(S)-ASA] and pyruvate to 4-hydroxy-tetrahydrodipicolinate (HTPA). The protein is 4-hydroxy-tetrahydrodipicolinate synthase of Ligilactobacillus salivarius (strain UCC118) (Lactobacillus salivarius).